The primary structure comprises 482 residues: Glutamyl-tRNA(Gln) amidotransferase subunit A (482 aa).

Active-site charge relay system residues include Lys81 and Ser156. Ser180 (acyl-ester intermediate) is an active-site residue.

It belongs to the amidase family. GatA subfamily. In terms of assembly, heterotrimer of A, B and C subunits.

It catalyses the reaction L-glutamyl-tRNA(Gln) + L-glutamine + ATP + H2O = L-glutaminyl-tRNA(Gln) + L-glutamate + ADP + phosphate + H(+). Its function is as follows. Allows the formation of correctly charged Gln-tRNA(Gln) through the transamidation of misacylated Glu-tRNA(Gln) in organisms which lack glutaminyl-tRNA synthetase. The reaction takes place in the presence of glutamine and ATP through an activated gamma-phospho-Glu-tRNA(Gln). The sequence is that of Glutamyl-tRNA(Gln) amidotransferase subunit A from Brachyspira hyodysenteriae (strain ATCC 49526 / WA1).